Here is a 1847-residue protein sequence, read N- to C-terminus: Peripheral-type benzodiazepine receptor-associated protein 1 (1847 aa).

Disordered regions lie at residues 57-81 (EESS…GTET), 282-318 (NQRE…EDDV), and 560-626 (SGPK…DTAS). Low complexity-rich tracts occupy residues 294-310 (GSTA…GAPG) and 600-613 (SLSN…IHNS). Residues 651-718 (ARIQVFLARY…PSNFVERVSD (68 aa)) enclose the SH3 1 domain. The tract at residues 728-787 (ELADSSHSSGPELSFLSGGGGGCSSGGQSSGGRSQPRPEEEATGDELSLSPPPEGLGEPL) is disordered. Positions 744 to 757 (SGGGGGCSSGGQSS) are enriched in gly residues. 3 Fibronectin type-III domains span residues 789-880 (VPYP…AGAG), 882-974 (VPSQ…TLPA), and 979-1077 (APLD…PALA). Disordered regions lie at residues 1107–1174 (LGYT…EGPD), 1191–1215 (DAGP…VCHR), 1240–1307 (NSLV…ILEQ), 1322–1478 (FSIP…ESSL), and 1514–1616 (PTDG…SHQD). Residues 1122–1133 (TQDSPASLSTEM) are compositionally biased toward polar residues. A compositionally biased stretch (basic and acidic residues) spans 1203–1215 (LTQKEPSTEVCHR). A compositionally biased stretch (acidic residues) spans 1253–1266 (DIQEEEEEEEEEEE). Residues 1272 to 1284 (WSFQKQVAGNSIG) show a composition bias toward polar residues. 2 stretches are compositionally biased toward acidic residues: residues 1296-1305 (CETDSDEEIL) and 1325-1335 (PEEEEEEDEEE). The span at 1340-1352 (PGPSSSSQDPSQP) shows a compositional bias: low complexity. Basic and acidic residues-rich tracts occupy residues 1412-1421 (RPQDPREHCS) and 1546-1578 (AWEK…ESRG). The 69-residue stretch at 1617 to 1685 (LPLRVFVALF…PCNMVAEVAV (69 aa)) folds into the SH3 2 domain. 2 disordered regions span residues 1701–1747 (PPNV…PGPP) and 1818–1847 (LEGP…RVQC). The SH3 3 domain maps to 1756-1823 (KTSRPMVAAF…PSNFLEGPGP (68 aa)).

It belongs to the RIMBP family. As to quaternary structure, interacts with RIMS1 and RIMS2. Interacts with TSPO. Interacts with CACNA1A. As to expression, specifically expressed in brain. High expression level in the limbic system such as the nucleus accumbens, septum, and hippocampus, as well as on the cerebellum and pineal gland. Abundant in the CA1 region of the hippocampus.

The protein resides in the cytoplasm. It localises to the mitochondrion. Required for synaptic transmission regulation. It probably controls the recruitement of voltage-gated calcium channels to the presynaptic membrane, and modulates neurotransmitter release. The protein is Peripheral-type benzodiazepine receptor-associated protein 1 of Rattus norvegicus (Rat).